We begin with the raw amino-acid sequence, 65 residues long: Small ribosomal subunit protein eS27 (65 aa).

Residues Cys20, Cys23, Cys39, and Cys42 each coordinate Zn(2+). The C4-type zinc finger occupies 20–42 (CIDCGNEQIVFSHPATKVRCLVC).

This sequence belongs to the eukaryotic ribosomal protein eS27 family. As to quaternary structure, part of the 30S ribosomal subunit. Zn(2+) is required as a cofactor.

This Thermococcus gammatolerans (strain DSM 15229 / JCM 11827 / EJ3) protein is Small ribosomal subunit protein eS27.